A 396-amino-acid polypeptide reads, in one-letter code: 1-deoxy-D-xylulose 5-phosphate reductoisomerase (396 aa).

NADPH contacts are provided by threonine 10, glycine 11, serine 12, isoleucine 13, and asparagine 123. Residue lysine 124 participates in 1-deoxy-D-xylulose 5-phosphate binding. Glutamate 125 is a binding site for NADPH. Aspartate 149 contributes to the Mn(2+) binding site. 1-deoxy-D-xylulose 5-phosphate contacts are provided by serine 150, glutamate 151, serine 185, and histidine 208. Mn(2+) is bound at residue glutamate 151. Glycine 214 lines the NADPH pocket. 1-deoxy-D-xylulose 5-phosphate contacts are provided by serine 221, asparagine 226, lysine 227, and glutamate 230. Glutamate 230 contacts Mn(2+).

Belongs to the DXR family. It depends on Mg(2+) as a cofactor. The cofactor is Mn(2+).

It carries out the reaction 2-C-methyl-D-erythritol 4-phosphate + NADP(+) = 1-deoxy-D-xylulose 5-phosphate + NADPH + H(+). Its pathway is isoprenoid biosynthesis; isopentenyl diphosphate biosynthesis via DXP pathway; isopentenyl diphosphate from 1-deoxy-D-xylulose 5-phosphate: step 1/6. Catalyzes the NADPH-dependent rearrangement and reduction of 1-deoxy-D-xylulose-5-phosphate (DXP) to 2-C-methyl-D-erythritol 4-phosphate (MEP). The protein is 1-deoxy-D-xylulose 5-phosphate reductoisomerase of Shewanella baltica (strain OS223).